The chain runs to 120 residues: MVKLTSIAAGVAAIAATASATTTLAQSDERVNLVELGVYVSDIRAHLAQYYSFQVAHPTETYPVEIAEAVFNYGDFTTMLTGIAPDQVTRMITGVPWYSSRLKPAISSALSKDGIYTIAN.

Residues 1-20 form the signal peptide; sequence MVKLTSIAAGVAAIAATASA.

Belongs to the SRP1/TIP1 family. Seripauperin subfamily. Post-translationally, O-glycosylated.

The protein localises to the secreted. It is found in the cell wall. Functionally, component of the cell wall. The polypeptide is Seripauperin-24 (PAU24) (Saccharomyces cerevisiae (strain ATCC 204508 / S288c) (Baker's yeast)).